The sequence spans 558 residues: Germacrene A synthase short form (558 aa).

5 residues coordinate Mg(2+): Asp-311, Asp-315, Asp-455, Thr-459, and Glu-463. The DDXXD motif motif lies at 311–315 (DDTYD).

It belongs to the terpene synthase family. It depends on Mg(2+) as a cofactor. In terms of tissue distribution, expressed in roots and in green and etiolated seedlings.

It catalyses the reaction (2E,6E)-farnesyl diphosphate = (+)-(R)-germacrene A + diphosphate. The protein operates within secondary metabolite biosynthesis; terpenoid biosynthesis. In terms of biological role, involved in sesquiterpene lactone biosynthesis. Produces exclusively (+)-germacrene A. This is Germacrene A synthase short form from Cichorium intybus (Chicory).